Here is a 217-residue protein sequence, read N- to C-terminus: Large ribosomal subunit protein uL3 (217 aa).

The interval 131 to 155 (FSSSRASHGNSRSHNVPGSIGMAQD) is disordered. The segment covering 132–145 (SSSRASHGNSRSHN) has biased composition (low complexity). Q154 carries the post-translational modification N5-methylglutamine.

The protein belongs to the universal ribosomal protein uL3 family. Part of the 50S ribosomal subunit. Forms a cluster with proteins L14 and L19. In terms of processing, methylated by PrmB.

One of the primary rRNA binding proteins, it binds directly near the 3'-end of the 23S rRNA, where it nucleates assembly of the 50S subunit. The polypeptide is Large ribosomal subunit protein uL3 (Nitrosomonas eutropha (strain DSM 101675 / C91 / Nm57)).